Consider the following 239-residue polypeptide: tRNA (guanine-N(7)-)-methyltransferase (239 aa).

Positions 69, 94, 121, and 144 each coordinate S-adenosyl-L-methionine. Residue D144 is part of the active site. K148 is a binding site for substrate. The interaction with RNA stretch occupies residues 150–155 (RHNKRR). Residues D180 and 217–220 (TKFE) contribute to the substrate site.

It belongs to the class I-like SAM-binding methyltransferase superfamily. TrmB family. Monomer.

The catalysed reaction is guanosine(46) in tRNA + S-adenosyl-L-methionine = N(7)-methylguanosine(46) in tRNA + S-adenosyl-L-homocysteine. The protein operates within tRNA modification; N(7)-methylguanine-tRNA biosynthesis. Catalyzes the formation of N(7)-methylguanine at position 46 (m7G46) in tRNA. In Sodalis glossinidius (strain morsitans), this protein is tRNA (guanine-N(7)-)-methyltransferase.